Here is a 194-residue protein sequence, read N- to C-terminus: uncharacterized protein (194 aa).

Positions 1–22 (MNKVTKTAIAGLLALFAGNAAA) are cleaved as a signal peptide. A disulfide bond links cysteine 38 and cysteine 78.

The protein belongs to the fimbrial protein family.

It localises to the fimbrium. Part of the yraHIJK fimbrial operon. Could contribute to adhesion to various surfaces in specific environmental niches. Increases adhesion to eukaryotic T24 bladder epithelial cells in the absence of fim operon. This is an uncharacterized protein from Escherichia coli (strain K12).